The primary structure comprises 344 residues: GTP 3',8-cyclase (344 aa).

The region spanning 19-244 (PFARPITYLR…TPLAERTGGP (226 aa)) is the Radical SAM core domain. Arginine 28 is a GTP binding site. 2 residues coordinate [4Fe-4S] cluster: cysteine 35 and cysteine 39. Position 41 (tyrosine 41) interacts with S-adenosyl-L-methionine. Cysteine 42 provides a ligand contact to [4Fe-4S] cluster. Residue arginine 77 participates in GTP binding. Glycine 81 is a binding site for S-adenosyl-L-methionine. Position 110 (threonine 110) interacts with GTP. Residue serine 134 coordinates S-adenosyl-L-methionine. Lysine 170 contributes to the GTP binding site. Residue methionine 204 coordinates S-adenosyl-L-methionine. [4Fe-4S] cluster contacts are provided by cysteine 268 and cysteine 271. 273–275 (RVR) is a GTP binding site. Cysteine 285 contributes to the [4Fe-4S] cluster binding site.

The protein belongs to the radical SAM superfamily. MoaA family. As to quaternary structure, monomer and homodimer. Requires [4Fe-4S] cluster as cofactor.

It catalyses the reaction GTP + AH2 + S-adenosyl-L-methionine = (8S)-3',8-cyclo-7,8-dihydroguanosine 5'-triphosphate + 5'-deoxyadenosine + L-methionine + A + H(+). It participates in cofactor biosynthesis; molybdopterin biosynthesis. In terms of biological role, catalyzes the cyclization of GTP to (8S)-3',8-cyclo-7,8-dihydroguanosine 5'-triphosphate. The sequence is that of GTP 3',8-cyclase from Paracoccus denitrificans (strain Pd 1222).